A 400-amino-acid polypeptide reads, in one-letter code: Enoyl-[acyl-carrier-protein] reductase [NADH] (400 aa).

Residues 48–53 (GASTGY), 74–75 (FE), 111–112 (DA), and 139–140 (LA) contribute to the NAD(+) site. Substrate is bound at residue Tyr225. Residue Tyr235 is the Proton donor of the active site. NAD(+) is bound by residues Lys244 and 273-275 (VVT).

Belongs to the TER reductase family. In terms of assembly, monomer.

It catalyses the reaction a 2,3-saturated acyl-[ACP] + NAD(+) = a (2E)-enoyl-[ACP] + NADH + H(+). The protein operates within lipid metabolism; fatty acid biosynthesis. Its function is as follows. Involved in the final reduction of the elongation cycle of fatty acid synthesis (FAS II). Catalyzes the reduction of a carbon-carbon double bond in an enoyl moiety that is covalently linked to an acyl carrier protein (ACP). In Burkholderia ambifaria (strain MC40-6), this protein is Enoyl-[acyl-carrier-protein] reductase [NADH].